The chain runs to 150 residues: Histone H2A.1 (150 aa).

M1 is modified (N-acetylmethionine). Basic residues-rich tracts occupy residues 1–24 (MDAS…KKSV) and 141–150 (SKAKKSPKKA). Disordered regions lie at residues 1–26 (MDAS…SVTR) and 128–150 (RKEN…PKKA). 2 consecutive short sequence motifs (SPKK motif) follow at residues 139–142 (SPSK) and 146–149 (SPKK).

It belongs to the histone H2A family. The nucleosome is a histone octamer containing two molecules each of H2A, H2B, H3 and H4 assembled in one H3-H4 heterotetramer and two H2A-H2B heterodimers. The octamer wraps approximately 147 bp of DNA. As to expression, high expression in root meristematic tissues, moderate in whole shoot and very low in mature leaves.

Its subcellular location is the nucleus. The protein resides in the chromosome. Functionally, core component of nucleosome. Nucleosomes wrap and compact DNA into chromatin, limiting DNA accessibility to the cellular machineries which require DNA as a template. Histones thereby play a central role in transcription regulation, DNA repair, DNA replication and chromosomal stability. DNA accessibility is regulated via a complex set of post-translational modifications of histones, also called histone code, and nucleosome remodeling. The polypeptide is Histone H2A.1 (Pisum sativum (Garden pea)).